The primary structure comprises 460 residues: Putative 2,3-dihydroxypropane-1-sulfonate exporter (460 aa).

The Cytoplasmic segment spans residues 1–18 (MSQTSSNPATLRLPFKEK). A helical membrane pass occupies residues 19 to 39 (LAYGLGDLGSNILLDIGTLYL). Over 40-46 (LKFYTDV) the chain is Periplasmic. Residues 47-67 (LGLPGTYGGIIFLIAKFFTAF) form a helical membrane-spanning segment. The Cytoplasmic portion of the chain corresponds to 68–91 (TDMGTGIMLDSRRKIGPKGKFRPF). Residues 92 to 112 (VLYAAFPVTLLAIANFVGTPF) traverse the membrane as a helical segment. Topologically, residues 113 to 122 (EVTGKTVVAT) are periplasmic. The helical transmembrane segment at 123-143 (MLFMLYGLVFSMMNCSYGAMV) threads the bilayer. Topologically, residues 144–161 (PAITKNPDERASLAAWRQ) are cytoplasmic. A helical membrane pass occupies residues 162-182 (GGATLGLLLCTVGFVPVMNLI). Residues 183-190 (EGNAQLSY) lie on the Periplasmic side of the membrane. A helical transmembrane segment spans residues 191-211 (IFAATLFSLFGLLFMWLCYAG). Over 212 to 242 (VKERYVEVKPVDSAQKPGLLQSFRAIAGNRP) the chain is Cytoplasmic. The helical transmembrane segment at 243-263 (LFILCIANLCTLGAFNVKLAI) threads the bilayer. Topologically, residues 264-275 (QVYYTQYVLNDP) are periplasmic. The chain crosses the membrane as a helical span at residues 276–296 (ILLSWMGFFSMGCIFIGVFLM). At 297 to 307 (PGAVRRFGKKK) the chain is on the cytoplasmic side. Residues 308–328 (VYIGGLLIWVAGDLLNYFFGG) form a helical membrane-spanning segment. Position 329 (Gly329) is a topological domain, periplasmic. The chain crosses the membrane as a helical span at residues 330 to 350 (SVSFVAFSCLAFFGSAFVNSL). Over 351 to 386 (NWALVSDTVEYGEWRTGVRSEGTVYTGFTFFRKVSQ) the chain is Cytoplasmic. A helical membrane pass occupies residues 387–407 (ALAGFFPGWMLTQIGYIPNVV). Residues 408 to 418 (QSAGTVEGLRQ) lie on the Periplasmic side of the membrane. The helical transmembrane segment at 419-439 (LIFIYPCVLAVITIIAMGCFY) threads the bilayer. Residues 440 to 460 (NLNEKMYVRIVEEIEARKHTV) are Cytoplasmic-facing.

The protein belongs to the sodium:galactoside symporter (TC 2.A.2) family.

The protein localises to the cell inner membrane. Could be involved in the export of 2,3-dihydroxypropane-1-sulfonate (DHPS). In Salmonella typhimurium (strain LT2 / SGSC1412 / ATCC 700720), this protein is Putative 2,3-dihydroxypropane-1-sulfonate exporter (yihP).